The sequence spans 709 residues: Polyribonucleotide nucleotidyltransferase (709 aa).

The Mg(2+) site is built by aspartate 485 and aspartate 491. In terms of domain architecture, KH spans 552–611 (PRIHTMKIDPKKIKDVIGKGGATIRALTEETGTSIDIDDDGTVKIAATDNNAAKRVMERI). Positions 621-689 (NAIYKGKVTR…RQGRIRLTMK (69 aa)) constitute an S1 motif domain.

This sequence belongs to the polyribonucleotide nucleotidyltransferase family. As to quaternary structure, component of the RNA degradosome, which is a multiprotein complex involved in RNA processing and mRNA degradation. It depends on Mg(2+) as a cofactor.

The protein localises to the cytoplasm. It catalyses the reaction RNA(n+1) + phosphate = RNA(n) + a ribonucleoside 5'-diphosphate. Involved in mRNA degradation. Catalyzes the phosphorolysis of single-stranded polyribonucleotides processively in the 3'- to 5'-direction. This Glaesserella parasuis serovar 5 (strain SH0165) (Haemophilus parasuis) protein is Polyribonucleotide nucleotidyltransferase.